A 165-amino-acid polypeptide reads, in one-letter code: Putative pre-16S rRNA nuclease (165 aa).

It belongs to the YqgF nuclease family.

It localises to the cytoplasm. In terms of biological role, could be a nuclease involved in processing of the 5'-end of pre-16S rRNA. This is Putative pre-16S rRNA nuclease from Beijerinckia indica subsp. indica (strain ATCC 9039 / DSM 1715 / NCIMB 8712).